A 177-amino-acid chain; its full sequence is MRLLPLVAAATAAFLVVACSSPTPPRGVTVVNNFDAKRYLGTWYEIARFDHRFERGLEKVTATYSLRDDGGLNVINKGYNPDRGMWQQSEGKAYFTGAPTRAALKVSFFGPFYGGYNVIALDREYRHALVCGPDRDYLWILSRTPTISDEVKQEMLAVATREGFDVSKFIWVQQPGS.

Residues 1-18 (MRLLPLVAAATAAFLVVA) form the signal peptide. A lipid anchor (N-palmitoyl cysteine) is attached at Cys-19. Cys-19 carries S-diacylglycerol cysteine lipidation.

Belongs to the calycin superfamily. Lipocalin family. As to quaternary structure, homodimer.

The protein localises to the cell outer membrane. Involved in the storage or transport of lipids necessary for membrane maintenance under stressful conditions. Displays a binding preference for lysophospholipids. The chain is Outer membrane lipoprotein Blc (blc) from Escherichia coli O157:H7.